The chain runs to 168 residues: uncharacterized protein (168 aa).

Disordered stretches follow at residues 37–74 (GGSK…SQFT), 81–100 (QYNY…PNYY), and 117–168 (MQPF…EETN). Composition is skewed to polar residues over residues 52-74 (HSGQ…SQFT) and 82-95 (YNYN…TRSV). The span at 120–129 (FNNQSFNNQS) shows a compositional bias: low complexity. Polar residues predominate over residues 130-158 (RTHQSKTYQHNQQKRSFNGPRNNGPQNNV).

This is an uncharacterized protein from Acanthamoeba polyphaga (Amoeba).